A 355-amino-acid chain; its full sequence is Tetraacyldisaccharide 4'-kinase (355 aa).

48–55 (SVGGTGKT) is an ATP binding site.

The protein belongs to the LpxK family.

The enzyme catalyses a lipid A disaccharide + ATP = a lipid IVA + ADP + H(+). It participates in glycolipid biosynthesis; lipid IV(A) biosynthesis; lipid IV(A) from (3R)-3-hydroxytetradecanoyl-[acyl-carrier-protein] and UDP-N-acetyl-alpha-D-glucosamine: step 6/6. Transfers the gamma-phosphate of ATP to the 4'-position of a tetraacyldisaccharide 1-phosphate intermediate (termed DS-1-P) to form tetraacyldisaccharide 1,4'-bis-phosphate (lipid IVA). The sequence is that of Tetraacyldisaccharide 4'-kinase from Pelodictyon phaeoclathratiforme (strain DSM 5477 / BU-1).